A 1262-amino-acid chain; its full sequence is Structural maintenance of chromosomes protein 1 (1262 aa).

The stretch at 171-497 (SRSHEFQAEY…VAVVRQLSEA (327 aa)) forms a coiled coil. The SMC hinge domain maps to 524–642 (SVYGRLVDLC…ESQEDAKQLA (119 aa)). The stretch at 680–937 (KKWDEKVVKQ…RLESLLTKKQ (258 aa)) forms a coiled coil. The interval 965-994 (EYEEDDGDDTASQSSQSATDGPSVSEEQIQ) is disordered. Residues 974-991 (TASQSSQSATDGPSVSEE) show a composition bias toward polar residues. The stretch at 1017–1086 (DGVRQMSNRL…QQFEKVKTDR (70 aa)) forms a coiled coil. Positions 1148–1183 (LSGGEKTIAALALLFAVHGRNPAPFFVLDEIDAALD) match the DA-box motif.

This sequence belongs to the SMC family. SMC1 subfamily. As to quaternary structure, component of the cohesin complex, composed of the smc-1 and smc-3 heterodimer attached via their SMC hinge domain, scc-1 which links them, and scc-3. Interacts with smc-3, scc-1, scc-3 and tim-1.

It is found in the nucleus. The protein resides in the chromosome. Its function is as follows. Involved in chromosome cohesion during cell cycle and in DNA repair. Required for chromosome segregation during mitosis. Central component of cohesin complex. The cohesin complex is required for the cohesion of sister chromatids after DNA replication. The cohesin complex apparently forms a large proteinaceous ring within which sister chromatids can be trapped. At anaphase, the complex is cleaved and dissociates from chromatin, allowing sister chromatids to segregate. This chain is Structural maintenance of chromosomes protein 1, found in Caenorhabditis elegans.